Here is a 317-residue protein sequence, read N- to C-terminus: HTH-type transcriptional regulator MetR (317 aa).

The HTH lysR-type domain occupies 1–59 (MIEVKHLKTLQALRNCGSLAAAAATLHQTQSALSHQFSDLEQRLGFRLFVRKSQPLRFT). Residues 19–38 (LAAAAATLHQTQSALSHQFS) constitute a DNA-binding region (H-T-H motif).

Belongs to the LysR transcriptional regulatory family.

It localises to the cytoplasm. In terms of biological role, control of the last step in methionine biosynthesis; MetR is a positive activator of the metA, metE and metH genes. It is also a negative regulator of its own expression. The polypeptide is HTH-type transcriptional regulator MetR (metR) (Escherichia coli O157:H7).